The sequence spans 464 residues: Olfactomedin (464 aa).

The signal sequence occupies residues 1–16 (MYICLLTLVLIHAAAA). 6 N-linked (GlcNAc...) asparagine glycosylation sites follow: Asn21, Asn85, Asn143, Asn228, Asn279, and Asn383. The region spanning 192-464 (SCQHQGLAHI…LLHYDIALKP (273 aa)) is the Olfactomedin-like domain. Cys193 and Cys394 form a disulfide bridge.

Oligomer; disulfide-linked. Post-translationally, most, if not all, of the six potential sites for N-glycosylation carry carbohydrate moieties of 8-10 sugar residues. Expressed exclusively in olfactory neuroepithelium.

The protein localises to the secreted. The protein resides in the extracellular space. May influence the maintenance, growth, or differentiation of chemosensory cilia on the apical dendrites of olfactory neurons. Major component of the extracellular matrix of the olfactory neuroepithelium. This chain is Olfactomedin, found in Aquarana catesbeiana (American bullfrog).